We begin with the raw amino-acid sequence, 105 residues long: Large ribosomal subunit protein bL21c (105 aa).

This sequence belongs to the bacterial ribosomal protein bL21 family. As to quaternary structure, part of the 50S ribosomal subunit.

It localises to the plastid. Its subcellular location is the chloroplast. Functionally, this protein binds to 23S rRNA. The polypeptide is Large ribosomal subunit protein bL21c (Trieres chinensis (Marine centric diatom)).